The sequence spans 302 residues: 4-hydroxy-tetrahydrodipicolinate synthase (302 aa).

Thr55 contributes to the pyruvate binding site. Tyr144 acts as the Proton donor/acceptor in catalysis. Lys172 serves as the catalytic Schiff-base intermediate with substrate. Val214 is a pyruvate binding site.

This sequence belongs to the DapA family. As to quaternary structure, homotetramer; dimer of dimers.

The protein localises to the cytoplasm. The catalysed reaction is L-aspartate 4-semialdehyde + pyruvate = (2S,4S)-4-hydroxy-2,3,4,5-tetrahydrodipicolinate + H2O + H(+). It functions in the pathway amino-acid biosynthesis; L-lysine biosynthesis via DAP pathway; (S)-tetrahydrodipicolinate from L-aspartate: step 3/4. In terms of biological role, catalyzes the condensation of (S)-aspartate-beta-semialdehyde [(S)-ASA] and pyruvate to 4-hydroxy-tetrahydrodipicolinate (HTPA). The chain is 4-hydroxy-tetrahydrodipicolinate synthase from Synechococcus sp. (strain WH7803).